We begin with the raw amino-acid sequence, 609 residues long: Replication protein A 70 kDa DNA-binding subunit (609 aa).

The tract at residues 112–164 (IGNPHPYNDGQGPPQPAAPAPASAPPPSKPQNISAPPPPSMNRGASKLFGGGS) is disordered. Positions 124-151 (PPQPAAPAPASAPPPSKPQNISAPPPPS) are enriched in pro residues. The OB DNA-binding region spans 189-273 (WTVRARVTNK…VKNDYEMTFN (85 aa)). Residues 472 to 494 (CPSQDCNKKVIDQQNGLFRCEKC) form a C4-type zinc finger.

Belongs to the replication factor A protein 1 family. Component of the heterotrimeric canonical replication protein A complex (RPA). Interacts with rpain-a.

The protein resides in the nucleus. It localises to the PML body. Its function is as follows. As part of the heterotrimeric replication protein A complex (RPA/RP-A), binds and stabilizes single-stranded DNA intermediates, that form during DNA replication or upon DNA stress. It prevents their reannealing and in parallel, recruits and activates different proteins and complexes involved in DNA metabolism. Thereby, it plays an essential role both in DNA replication and the cellular response to DNA damage. The polypeptide is Replication protein A 70 kDa DNA-binding subunit (rpa1) (Xenopus tropicalis (Western clawed frog)).